We begin with the raw amino-acid sequence, 677 residues long: DNA ligase (677 aa).

Residues 35-39, 84-85, and Glu-115 each bind NAD(+); these read DAVYD and SL. Lys-117 serves as the catalytic N6-AMP-lysine intermediate. 4 residues coordinate NAD(+): Arg-138, Glu-177, Lys-296, and Lys-320. Residues Cys-414, Cys-417, Cys-432, and Cys-437 each contribute to the Zn(2+) site. The region spanning 599-677 is the BRCT domain; it reads NGILKLNGKT…ETQLLEILEE (79 aa).

This sequence belongs to the NAD-dependent DNA ligase family. LigA subfamily. Mg(2+) is required as a cofactor. It depends on Mn(2+) as a cofactor.

The enzyme catalyses NAD(+) + (deoxyribonucleotide)n-3'-hydroxyl + 5'-phospho-(deoxyribonucleotide)m = (deoxyribonucleotide)n+m + AMP + beta-nicotinamide D-nucleotide.. Functionally, DNA ligase that catalyzes the formation of phosphodiester linkages between 5'-phosphoryl and 3'-hydroxyl groups in double-stranded DNA using NAD as a coenzyme and as the energy source for the reaction. It is essential for DNA replication and repair of damaged DNA. The sequence is that of DNA ligase from Nostoc sp. (strain PCC 7120 / SAG 25.82 / UTEX 2576).